The following is a 402-amino-acid chain: Phosphopentomutase (402 aa).

6 residues coordinate Mn(2+): D10, D301, H306, D342, H343, and H354.

Belongs to the phosphopentomutase family. It depends on Mn(2+) as a cofactor.

Its subcellular location is the cytoplasm. It carries out the reaction 2-deoxy-alpha-D-ribose 1-phosphate = 2-deoxy-D-ribose 5-phosphate. The catalysed reaction is alpha-D-ribose 1-phosphate = D-ribose 5-phosphate. The protein operates within carbohydrate degradation; 2-deoxy-D-ribose 1-phosphate degradation; D-glyceraldehyde 3-phosphate and acetaldehyde from 2-deoxy-alpha-D-ribose 1-phosphate: step 1/2. Functionally, isomerase that catalyzes the conversion of deoxy-ribose 1-phosphate (dRib-1-P) and ribose 1-phosphate (Rib-1-P) to deoxy-ribose 5-phosphate (dRib-5-P) and ribose 5-phosphate (Rib-5-P), respectively. The sequence is that of Phosphopentomutase from Aeromonas hydrophila subsp. hydrophila (strain ATCC 7966 / DSM 30187 / BCRC 13018 / CCUG 14551 / JCM 1027 / KCTC 2358 / NCIMB 9240 / NCTC 8049).